The sequence spans 557 residues: MAAQGFLLIATFLLVFMVLARPLGSGLARLINDIPLPGTTGVERVLFSALGVSDREMNWKQYLSAILGLNILGLAVLFFMLLGQHYLPLNPQQLPGLSWDLALNTAVSFVTNTNWQSYSGETTLSYFSQMAGLTVQNFLSAASGIAVIFALIRAFTRQSMNTLGNAWVDLLRITLWVLTPVALLIALFFIQQGALQNFLPYQAVTTIEGAQQLLPMGPVASQEAIKMLGTNGGGFFNANSSHPFENPTALTNFVQMLAIFLIPTALCFAFGEVAGDRRQGRMLLWAMSVIFVICVGVVMWAEVQGNPHLLALGADSSINMEGKESRFGVLVSSLFAVVTTAASCGAVIAMHDSFTALGGMVPMWLMQIGEVVFGGVGSGLYGMMLFVLLAVFIAGLMIGRTPEYLGKKIDVREMKLTALAILVTPTLVLMGAALAMMTDAGRSAMLNPGPHGFSEVLYAVSSAANNNGSAFAGLSANSPFWNCLLALCMFVGRFGVIIPVMAIAGSLVSKKSQPASSGTLPTHGPLFVGLLIGTVLLVGALTFIPALALGPVAEYLS.

12 helical membrane passes run 5–25 (GFLL…PLGS), 63–83 (LSAI…MLLG), 132–152 (GLTV…FALI), 170–190 (LLRI…LFFI), 253–273 (FVQM…FGEV), 283–303 (LLWA…WAEV), 329–349 (VLVS…AVIA), 356–376 (ALGG…FGGV), 379–399 (GLYG…LMIG), 416–436 (LTAL…ALAM), 484–504 (LLAL…MAIA), and 526–546 (LFVG…FIPA).

The protein belongs to the KdpA family. As to quaternary structure, the system is composed of three essential subunits: KdpA, KdpB and KdpC.

The protein resides in the cell inner membrane. Its function is as follows. Part of the high-affinity ATP-driven potassium transport (or Kdp) system, which catalyzes the hydrolysis of ATP coupled with the electrogenic transport of potassium into the cytoplasm. This subunit binds the periplasmic potassium ions and delivers the ions to the membrane domain of KdpB through an intramembrane tunnel. The polypeptide is Potassium-transporting ATPase potassium-binding subunit (Escherichia coli (strain UTI89 / UPEC)).